Consider the following 545-residue polypeptide: CTP synthase (545 aa).

Residues M1 to Y266 form an amidoligase domain region. Residue S13 coordinates CTP. S13 serves as a coordination point for UTP. Residues S14–I19 and D71 contribute to the ATP site. Residues D71 and E140 each contribute to the Mg(2+) site. Residues D147–E149, K187–Q192, and K223 contribute to the CTP site. UTP contacts are provided by residues K187 to Q192 and K223. Residue K239–A241 coordinates ATP. Residues R292 to K543 form the Glutamine amidotransferase type-1 domain. G353 provides a ligand contact to L-glutamine. C380 functions as the Nucleophile; for glutamine hydrolysis in the catalytic mechanism. Residues L381–Q384, E404, and R471 each bind L-glutamine. Active-site residues include H516 and E518.

This sequence belongs to the CTP synthase family. As to quaternary structure, homotetramer.

It catalyses the reaction UTP + L-glutamine + ATP + H2O = CTP + L-glutamate + ADP + phosphate + 2 H(+). It carries out the reaction L-glutamine + H2O = L-glutamate + NH4(+). The enzyme catalyses UTP + NH4(+) + ATP = CTP + ADP + phosphate + 2 H(+). Its pathway is pyrimidine metabolism; CTP biosynthesis via de novo pathway; CTP from UDP: step 2/2. Its activity is regulated as follows. Allosterically activated by GTP, when glutamine is the substrate; GTP has no effect on the reaction when ammonia is the substrate. The allosteric effector GTP functions by stabilizing the protein conformation that binds the tetrahedral intermediate(s) formed during glutamine hydrolysis. Inhibited by the product CTP, via allosteric rather than competitive inhibition. Its function is as follows. Catalyzes the ATP-dependent amination of UTP to CTP with either L-glutamine or ammonia as the source of nitrogen. Regulates intracellular CTP levels through interactions with the four ribonucleotide triphosphates. This Acinetobacter baylyi (strain ATCC 33305 / BD413 / ADP1) protein is CTP synthase.